The chain runs to 79 residues: Conotoxin TsMSGL-2 (79 aa).

A signal peptide spans 1–24 (MSGLGIMVLTLLLLVFMATSHQDA). Positions 25-46 (GEKQATQRDAVNVRRRRSIAGR) are excised as a propeptide. 3 disulfide bridges follow: Cys52/Cys64, Cys56/Cys73, and Cys63/Cys77. Position 78 is a leucine amide (Leu78).

The protein belongs to the conotoxin O3 superfamily. As to expression, expressed by the venom duct.

The protein localises to the secreted. The chain is Conotoxin TsMSGL-2 from Conus tessulatus (Tessellate cone).